The sequence spans 485 residues: Glutamyl-tRNA(Gln) amidotransferase subunit A (485 aa).

Catalysis depends on charge relay system residues Lys78 and Ser153. Ser177 acts as the Acyl-ester intermediate in catalysis.

This sequence belongs to the amidase family. GatA subfamily. As to quaternary structure, heterotrimer of A, B and C subunits.

The enzyme catalyses L-glutamyl-tRNA(Gln) + L-glutamine + ATP + H2O = L-glutaminyl-tRNA(Gln) + L-glutamate + ADP + phosphate + H(+). Functionally, allows the formation of correctly charged Gln-tRNA(Gln) through the transamidation of misacylated Glu-tRNA(Gln) in organisms which lack glutaminyl-tRNA synthetase. The reaction takes place in the presence of glutamine and ATP through an activated gamma-phospho-Glu-tRNA(Gln). The sequence is that of Glutamyl-tRNA(Gln) amidotransferase subunit A from Trichlorobacter lovleyi (strain ATCC BAA-1151 / DSM 17278 / SZ) (Geobacter lovleyi).